A 218-amino-acid polypeptide reads, in one-letter code: Octanoyltransferase (218 aa).

A BPL/LPL catalytic domain is found at 32–214 (ALTPDEIWLV…HFTQLLGYND (183 aa)). Residues 71 to 78 (RGGQITYH), 143 to 145 (SLG), and 156 to 158 (GLA) contribute to the substrate site. Cysteine 174 functions as the Acyl-thioester intermediate in the catalytic mechanism.

The protein belongs to the LipB family.

Its subcellular location is the cytoplasm. The enzyme catalyses octanoyl-[ACP] + L-lysyl-[protein] = N(6)-octanoyl-L-lysyl-[protein] + holo-[ACP] + H(+). The protein operates within protein modification; protein lipoylation via endogenous pathway; protein N(6)-(lipoyl)lysine from octanoyl-[acyl-carrier-protein]: step 1/2. Its function is as follows. Catalyzes the transfer of endogenously produced octanoic acid from octanoyl-acyl-carrier-protein onto the lipoyl domains of lipoate-dependent enzymes. Lipoyl-ACP can also act as a substrate although octanoyl-ACP is likely to be the physiological substrate. The chain is Octanoyltransferase from Histophilus somni (strain 129Pt) (Haemophilus somnus).